A 321-amino-acid chain; its full sequence is Phosphopantothenate--cysteine ligase 1 (321 aa).

Belongs to the PPC synthetase family. In terms of assembly, homodimer.

The catalysed reaction is (R)-4'-phosphopantothenate + L-cysteine + CTP = N-[(R)-4-phosphopantothenoyl]-L-cysteine + CMP + diphosphate + H(+). It participates in cofactor biosynthesis; coenzyme A biosynthesis; CoA from (R)-pantothenate: step 2/5. Its function is as follows. Catalyzes the first step in the biosynthesis of coenzyme A from vitamin B5, where cysteine is conjugated to 4'-phosphopantothenate to form 4-phosphopantothenoylcysteine. The chain is Phosphopantothenate--cysteine ligase 1 from Oryza sativa subsp. japonica (Rice).